Here is a 230-residue protein sequence, read N- to C-terminus: Large ribosomal subunit protein uL1c (230 aa).

The protein belongs to the universal ribosomal protein uL1 family. In terms of assembly, part of the 50S ribosomal subunit.

It is found in the plastid. It localises to the chloroplast. Its function is as follows. Binds directly to 23S rRNA. Might be involved in E site tRNA release (Potential). This is Large ribosomal subunit protein uL1c (rpl1) from Thalassiosira pseudonana (Marine diatom).